The sequence spans 603 residues: Elongation factor 4 (603 aa).

The tr-type G domain maps to 6-188 (SKIRNFCIIA…QIVKKIPAPT (183 aa)). Residues 18 to 23 (DHGKST) and 135 to 138 (NKVD) contribute to the GTP site.

This sequence belongs to the TRAFAC class translation factor GTPase superfamily. Classic translation factor GTPase family. LepA subfamily.

It is found in the cell membrane. It catalyses the reaction GTP + H2O = GDP + phosphate + H(+). Its function is as follows. Required for accurate and efficient protein synthesis under certain stress conditions. May act as a fidelity factor of the translation reaction, by catalyzing a one-codon backward translocation of tRNAs on improperly translocated ribosomes. Back-translocation proceeds from a post-translocation (POST) complex to a pre-translocation (PRE) complex, thus giving elongation factor G a second chance to translocate the tRNAs correctly. Binds to ribosomes in a GTP-dependent manner. This is Elongation factor 4 from Agathobacter rectalis (strain ATCC 33656 / DSM 3377 / JCM 17463 / KCTC 5835 / VPI 0990) (Eubacterium rectale).